A 526-amino-acid polypeptide reads, in one-letter code: ATP synthase subunit alpha (526 aa).

171–178 (GDRQTGKT) contributes to the ATP binding site.

Belongs to the ATPase alpha/beta chains family. As to quaternary structure, F-type ATPases have 2 components, CF(1) - the catalytic core - and CF(0) - the membrane proton channel. CF(1) has five subunits: alpha(3), beta(3), gamma(1), delta(1), epsilon(1). CF(0) has four main subunits: a, b, b' and c.

It localises to the cell inner membrane. The catalysed reaction is ATP + H2O + 4 H(+)(in) = ADP + phosphate + 5 H(+)(out). Functionally, produces ATP from ADP in the presence of a proton gradient across the membrane. The alpha chain is a regulatory subunit. This chain is ATP synthase subunit alpha, found in Chlorobium limicola (strain DSM 245 / NBRC 103803 / 6330).